The sequence spans 327 residues: ATP-dependent 6-phosphofructokinase (327 aa).

An ATP-binding site is contributed by glycine 12. Residues 22-26 (RGVVR) and 55-60 (RYSVSD) contribute to the ADP site. Residues 73–74 (RF) and 103–106 (GDGS) each bind ATP. Aspartate 104 contacts Mg(2+). 127–129 (TID) lines the substrate pocket. The active-site Proton acceptor is the aspartate 129. Arginine 156 is an ADP binding site. Substrate contacts are provided by residues arginine 164 and 171–173 (MGR). ADP-binding positions include 187 to 189 (GCE), lysine 213, and 215 to 217 (KKH). Substrate-binding positions include glutamate 224, arginine 245, and 251 to 254 (HIQR).

This sequence belongs to the phosphofructokinase type A (PFKA) family. ATP-dependent PFK group I subfamily. Prokaryotic clade 'B1' sub-subfamily. As to quaternary structure, homotetramer. It depends on Mg(2+) as a cofactor.

Its subcellular location is the cytoplasm. The catalysed reaction is beta-D-fructose 6-phosphate + ATP = beta-D-fructose 1,6-bisphosphate + ADP + H(+). Its pathway is carbohydrate degradation; glycolysis; D-glyceraldehyde 3-phosphate and glycerone phosphate from D-glucose: step 3/4. Allosterically activated by ADP and other diphosphonucleosides, and allosterically inhibited by phosphoenolpyruvate. Its function is as follows. Catalyzes the phosphorylation of D-fructose 6-phosphate to fructose 1,6-bisphosphate by ATP, the first committing step of glycolysis. This Yersinia pseudotuberculosis serotype IB (strain PB1/+) protein is ATP-dependent 6-phosphofructokinase.